Here is a 391-residue protein sequence, read N- to C-terminus: 3-demethoxyubiquinol 3-hydroxylase (391 aa).

This sequence belongs to the UbiH/COQ6 family. As to quaternary structure, component of the Ubi complex metabolon, which regroups five ubiquinone biosynthesis proteins (UbiE, UbiF, UbiG, UbiH and UbiI) and two accessory factors (UbiK and the lipid-binding protein UbiJ). Requires FAD as cofactor.

The protein resides in the cytoplasm. It carries out the reaction a 5-methoxy-2-methyl-3-(all-trans-polyprenyl)benzene-1,4-diol + AH2 + O2 = a 3-demethylubiquinol + A + H2O. Its pathway is cofactor biosynthesis; ubiquinone biosynthesis. Functionally, catalyzes the hydroxylation of 2-octaprenyl-3-methyl-6-methoxy-1,4-benzoquinol during ubiquinone biosynthesis. The sequence is that of 3-demethoxyubiquinol 3-hydroxylase (ubiF) from Escherichia coli (strain K12).